Consider the following 405-residue polypeptide: uncharacterized protein (405 aa).

13 consecutive transmembrane segments (helical) span residues 19-39 (IVSI…PLAV), 48-68 (MGFS…ATLL), 85-105 (IVVF…LADI), 106-126 (ASAW…ILGI), 129-149 (SFAG…LHIG), 156-176 (GIVT…CYAW), 178-198 (GLQG…LLAL), 224-244 (GMAL…ITLF), 252-272 (GAAF…LLFP), 283-303 (VAMI…TAAM), 309-329 (IGVL…GVVA), 344-364 (TYTV…GLVM), and 366-386 (WAGV…ALLL).

Belongs to the major facilitator superfamily. YhhS family.

Its subcellular location is the cell inner membrane. This is an uncharacterized protein from Salmonella paratyphi C (strain RKS4594).